A 328-amino-acid polypeptide reads, in one-letter code: Homeobox protein DLX-2 (328 aa).

Composition is skewed to polar residues over residues 16–28 and 52–72; these read QIAASSTYHQHQQ and ESPTLPVSTATDSSYYTNQQH. Disordered stretches follow at residues 16–81, 211–270, and 300–328; these read QIAA…GGGG, WKSG…SSPS, and LHPTQTPQPHHHHHHHGGGGAPVSAGTIF. The homeobox DNA-binding region spans 152-211; that stretch reads VRKPRTIYSSFQLAALQRRFQKTQYLALPERAELAASLGLTQTQVKIWFQNRRSKFKKMW. Position 232 is a phosphoserine (Ser-232). Gly residues predominate over residues 250-264; it reads AGGGGPGSGGSGAGS.

Belongs to the distal-less homeobox family. As to quaternary structure, interacts (via homeobox DNA-binding domain) with POU4F2; this interaction enhances retinal ganglion cell (RGC) differentiation.

It localises to the nucleus. Functionally, acts as a transcriptional activator. Activates transcription of CGA/alpha-GSU, via binding to the downstream activin regulatory element (DARE) in the gene promoter. Plays a role in terminal differentiation of interneurons, such as amacrine and bipolar cells in the developing retina. Likely to play a regulatory role in the development of the ventral forebrain. May play a role in craniofacial patterning and morphogenesis. The protein is Homeobox protein DLX-2 (DLX2) of Homo sapiens (Human).